The sequence spans 151 residues: Small ribosomal subunit protein bS6 (151 aa).

The segment at 97 to 151 (EAEPSAMMQKRDRDDRKDRDRGDRPRRRDDDFGGGDRGDRGDRGDRPERNFGGEN) is disordered. The span at 105-151 (QKRDRDDRKDRDRGDRPRRRDDDFGGGDRGDRGDRGDRPERNFGGEN) shows a compositional bias: basic and acidic residues.

It belongs to the bacterial ribosomal protein bS6 family.

Its function is as follows. Binds together with bS18 to 16S ribosomal RNA. This chain is Small ribosomal subunit protein bS6, found in Methylorubrum populi (strain ATCC BAA-705 / NCIMB 13946 / BJ001) (Methylobacterium populi).